We begin with the raw amino-acid sequence, 234 residues long: S-adenosylmethionine synthase 1 (234 aa).

Residues 10 to 12 (DGK), 78 to 81 (SGRF), Asp-89, 95 to 96 (RK), Ala-112, Lys-116, and Lys-120 contribute to the ATP site. Residue Asp-89 coordinates L-methionine. Lys-120 is an L-methionine binding site.

The protein belongs to the AdoMet synthase family. As to quaternary structure, homotetramer. Requires Mn(2+) as cofactor. Mg(2+) is required as a cofactor. It depends on Co(2+) as a cofactor. The cofactor is K(+). As to expression, mainly in floral buds and roots.

It is found in the cytoplasm. It catalyses the reaction L-methionine + ATP + H2O = S-adenosyl-L-methionine + phosphate + diphosphate. It participates in amino-acid biosynthesis; S-adenosyl-L-methionine biosynthesis; S-adenosyl-L-methionine from L-methionine: step 1/1. Catalyzes the formation of S-adenosylmethionine from methionine and ATP. The reaction comprises two steps that are both catalyzed by the same enzyme: formation of S-adenosylmethionine (AdoMet) and triphosphate, and subsequent hydrolysis of the triphosphate. The chain is S-adenosylmethionine synthase 1 (SMS-1) from Petroselinum crispum (Parsley).